The primary structure comprises 469 residues: Ribulose bisphosphate carboxylase large chain (469 aa).

The substrate site is built by asparagine 115 and threonine 165. Lysine 167 (proton acceptor) is an active-site residue. Residue lysine 169 coordinates substrate. Mg(2+)-binding residues include lysine 193, aspartate 195, and glutamate 196. Lysine 193 is subject to N6-carboxylysine. Residue histidine 286 is the Proton acceptor of the active site. The substrate site is built by arginine 287, histidine 319, and serine 371.

It belongs to the RuBisCO large chain family. Type I subfamily. Heterohexadecamer of 8 large chains and 8 small chains. Requires Mg(2+) as cofactor.

The protein localises to the plastid. It localises to the organellar chromatophore. It catalyses the reaction 2 (2R)-3-phosphoglycerate + 2 H(+) = D-ribulose 1,5-bisphosphate + CO2 + H2O. It carries out the reaction D-ribulose 1,5-bisphosphate + O2 = 2-phosphoglycolate + (2R)-3-phosphoglycerate + 2 H(+). RuBisCO catalyzes two reactions: the carboxylation of D-ribulose 1,5-bisphosphate, the primary event in carbon dioxide fixation, as well as the oxidative fragmentation of the pentose substrate. Both reactions occur simultaneously and in competition at the same active site. In Paulinella chromatophora, this protein is Ribulose bisphosphate carboxylase large chain.